Here is a 514-residue protein sequence, read N- to C-terminus: Peptide chain release factor 3 (514 aa).

A tr-type G domain is found at 8–268; sequence KKRRTFAIIS…TFLKFAPEPH (261 aa). GTP-binding positions include 17 to 24, 85 to 89, and 139 to 142; these read SHPDAGKT, DTPGH, and NKLD.

It belongs to the TRAFAC class translation factor GTPase superfamily. Classic translation factor GTPase family. PrfC subfamily.

The protein resides in the cytoplasm. Its function is as follows. Increases the formation of ribosomal termination complexes and stimulates activities of RF-1 and RF-2. It binds guanine nucleotides and has strong preference for UGA stop codons. It may interact directly with the ribosome. The stimulation of RF-1 and RF-2 is significantly reduced by GTP and GDP, but not by GMP. This Streptococcus gordonii (strain Challis / ATCC 35105 / BCRC 15272 / CH1 / DL1 / V288) protein is Peptide chain release factor 3.